The chain runs to 498 residues: Glycerol kinase (498 aa).

An ADP-binding site is contributed by T11. Residues T11, S12, and S13 each contribute to the ATP site. Residue T11 coordinates sn-glycerol 3-phosphate. ADP is bound at residue R15. Sn-glycerol 3-phosphate contacts are provided by R81, E82, Y133, and D242. The glycerol site is built by R81, E82, Y133, D242, and Q243. ADP contacts are provided by T264 and G307. ATP is bound by residues T264, G307, Q311, and G412. 2 residues coordinate ADP: G412 and N416.

Belongs to the FGGY kinase family.

It catalyses the reaction glycerol + ATP = sn-glycerol 3-phosphate + ADP + H(+). It participates in polyol metabolism; glycerol degradation via glycerol kinase pathway; sn-glycerol 3-phosphate from glycerol: step 1/1. Inhibited by fructose 1,6-bisphosphate (FBP). In terms of biological role, key enzyme in the regulation of glycerol uptake and metabolism. Catalyzes the phosphorylation of glycerol to yield sn-glycerol 3-phosphate. The chain is Glycerol kinase from Acidovorax ebreus (strain TPSY) (Diaphorobacter sp. (strain TPSY)).